The primary structure comprises 396 residues: Flap endonuclease 1 (396 aa).

An N-domain region spans residues 1 to 104; sequence MGIKHLYQLI…GELAKRFQRK (104 aa). D34 provides a ligand contact to Mg(2+). The DNA site is built by R47 and R70. Residues D86, E158, E160, D179, and D181 each coordinate Mg(2+). The tract at residues 122–255 is I-domain; the sequence is DVEKFSRRTV…STALKLIRDH (134 aa). E158 provides a ligand contact to DNA. Positions 233 and 235 each coordinate DNA. A Mg(2+)-binding site is contributed by D235. The disordered stretch occupies residues 338 to 396; sequence MKSAQQSRLEGFFKPVERTPEEKASLKRKADEKLSEKKKKQKEEAKAKKQAKSKPRTAG. The tract at residues 342–350 is interaction with PCNA; it reads QQSRLEGFF. Over residues 352–384 the composition is skewed to basic and acidic residues; sequence PVERTPEEKASLKRKADEKLSEKKKKQKEEAKA. The span at 385–396 shows a compositional bias: basic residues; the sequence is KKQAKSKPRTAG.

It belongs to the XPG/RAD2 endonuclease family. FEN1 subfamily. As to quaternary structure, interacts with PCNA. Three molecules of FEN1 bind to one PCNA trimer with each molecule binding to one PCNA monomer. PCNA stimulates the nuclease activity without altering cleavage specificity. Mg(2+) serves as cofactor. Phosphorylated. Phosphorylation upon DNA damage induces relocalization to the nuclear plasma.

It localises to the nucleus. It is found in the nucleolus. Its subcellular location is the nucleoplasm. The protein localises to the mitochondrion. Its function is as follows. Structure-specific nuclease with 5'-flap endonuclease and 5'-3' exonuclease activities involved in DNA replication and repair. During DNA replication, cleaves the 5'-overhanging flap structure that is generated by displacement synthesis when DNA polymerase encounters the 5'-end of a downstream Okazaki fragment. It enters the flap from the 5'-end and then tracks to cleave the flap base, leaving a nick for ligation. Also involved in the long patch base excision repair (LP-BER) pathway, by cleaving within the apurinic/apyrimidinic (AP) site-terminated flap. Acts as a genome stabilization factor that prevents flaps from equilibrating into structures that lead to duplications and deletions. Also possesses 5'-3' exonuclease activity on nicked or gapped double-stranded DNA, and exhibits RNase H activity. Also involved in replication and repair of rDNA and in repairing mitochondrial DNA. In Phaeosphaeria nodorum (strain SN15 / ATCC MYA-4574 / FGSC 10173) (Glume blotch fungus), this protein is Flap endonuclease 1.